Consider the following 149-residue polypeptide: Nucleoside diphosphate kinase (149 aa).

Lys-9, Phe-57, Arg-85, Thr-91, Arg-102, and Asn-112 together coordinate ATP. Residue His-115 is the Pros-phosphohistidine intermediate of the active site.

Belongs to the NDK family. Requires Mg(2+) as cofactor.

Its subcellular location is the cytoplasm. The enzyme catalyses a 2'-deoxyribonucleoside 5'-diphosphate + ATP = a 2'-deoxyribonucleoside 5'-triphosphate + ADP. The catalysed reaction is a ribonucleoside 5'-diphosphate + ATP = a ribonucleoside 5'-triphosphate + ADP. In terms of biological role, major role in the synthesis of nucleoside triphosphates other than ATP. The ATP gamma phosphate is transferred to the NDP beta phosphate via a ping-pong mechanism, using a phosphorylated active-site intermediate. This is Nucleoside diphosphate kinase from Methanosarcina barkeri (strain Fusaro / DSM 804).